The following is a 392-amino-acid chain: MIRYLTSGESHGPSLVAIVEGVPAGLALHPDDLNIHLQRRQQGYGRGNRMKIESDKAEILSGVRFGYTIGSPISFAIKNKDWANWTNKMNQFENPSEPVATIDIPRPGHADFSGRIKYGFNDIRPVIERSSARETAARVGACSISRKFLHDLGIEIGSYVSAIGQAFETEPNHHAVKILEKGAETLMHEADESPVRMLNKDLEKQAMELIDTAKKAGDTLGGIVEVFVTGLPIGLGSYVQYDRRLGADLGAAILSIQAVKGFEIGHAFKNAVSFGSEVHDEFYLDKNGNPQRKTNRAGGLEGGMTNGETLHLRVAMKPIATLMSPLSSFDFKTMSPAASHIERSDTCAVPACGVIAESVIAPVLANAILEKFGGDTINETKLRLDNYTQKGK.

2 residues coordinate NADP(+): arginine 40 and arginine 46. Residues 129-131, 257-258, glycine 302, 317-321, and arginine 343 each bind FMN; these read RSS, QA, and KPIAT.

This sequence belongs to the chorismate synthase family. As to quaternary structure, homotetramer. The cofactor is FMNH2.

It carries out the reaction 5-O-(1-carboxyvinyl)-3-phosphoshikimate = chorismate + phosphate. Its pathway is metabolic intermediate biosynthesis; chorismate biosynthesis; chorismate from D-erythrose 4-phosphate and phosphoenolpyruvate: step 7/7. Catalyzes the anti-1,4-elimination of the C-3 phosphate and the C-6 proR hydrogen from 5-enolpyruvylshikimate-3-phosphate (EPSP) to yield chorismate, which is the branch point compound that serves as the starting substrate for the three terminal pathways of aromatic amino acid biosynthesis. This reaction introduces a second double bond into the aromatic ring system. The polypeptide is Chorismate synthase (Chloroherpeton thalassium (strain ATCC 35110 / GB-78)).